Reading from the N-terminus, the 30-residue chain is Antibacterial 6.5 kDa protein (30 aa).

Residues 1–21 (XXVPYPRPFPRPPIGPRPLPF) show a composition bias toward pro residues. Residues 1-30 (XXVPYPRPFPRPPIGPRPLPFPGGGRPFQS) form a disordered region.

The protein to bovine bactenecin 7.

Functionally, strong antimicrobial activity against P.immobilis and M.luteus, less active against E.coli D22. The chain is Antibacterial 6.5 kDa protein from Carcinus maenas (Common shore crab).